We begin with the raw amino-acid sequence, 303 residues long: MDPLEDVLTLLKTRSHLSASLVAGGRWAVVFDAPQVLKFNAVRRGACLLKVDGDDEPIDLAEGDCYLLTRPRSFTLCSDLEAAPSDGGAVFARAEDGIARAGQGDDVFLIGGGFSFATHAQELLLDNLPPVVHVPAGTPHAEAVQWALTAIDQELTHQPMASTLVAEHLAVVMLIHVLRLHLERAPDAVSGWLAGLADPVVASALTFLHRDPAHSWTVAELASAAAVSRSTLAARFKATVGQGPLEYLTRWRIELTARQLREGSAPLAAIAHSVGYGSESALSVAFKRVLGMNPGDYRKHPMP.

In terms of domain architecture, HTH araC/xylS-type spans 202-300; the sequence is ASALTFLHRD…GMNPGDYRKH (99 aa). DNA-binding regions (H-T-H motif) lie at residues 219 to 240 and 267 to 290; these read AELASAAAVSRSTLAARFKATV and LAAIAHSVGYGSESALSVAFKRVL.

This Streptomyces antibioticus protein is Putative AraC-like transcription regulator.